Reading from the N-terminus, the 494-residue chain is Glycerol kinase (494 aa).

Thr13 provides a ligand contact to ADP. 3 residues coordinate ATP: Thr13, Thr14, and Ser15. Residue Thr13 participates in sn-glycerol 3-phosphate binding. Arg17 lines the ADP pocket. The sn-glycerol 3-phosphate site is built by Arg83, Glu84, Tyr135, and Asp244. Arg83, Glu84, Tyr135, Asp244, and Gln245 together coordinate glycerol. Residues Thr266 and Gly309 each contribute to the ADP site. The ATP site is built by Thr266, Gly309, Gln313, and Gly410. Residues Gly410 and Asn414 each coordinate ADP.

This sequence belongs to the FGGY kinase family.

The enzyme catalyses glycerol + ATP = sn-glycerol 3-phosphate + ADP + H(+). It functions in the pathway polyol metabolism; glycerol degradation via glycerol kinase pathway; sn-glycerol 3-phosphate from glycerol: step 1/1. With respect to regulation, inhibited by fructose 1,6-bisphosphate (FBP). Functionally, key enzyme in the regulation of glycerol uptake and metabolism. Catalyzes the phosphorylation of glycerol to yield sn-glycerol 3-phosphate. The protein is Glycerol kinase of Shewanella oneidensis (strain ATCC 700550 / JCM 31522 / CIP 106686 / LMG 19005 / NCIMB 14063 / MR-1).